The chain runs to 100 residues: Aspartyl/glutamyl-tRNA(Asn/Gln) amidotransferase subunit C (100 aa).

Belongs to the GatC family. As to quaternary structure, heterotrimer of A, B and C subunits.

It catalyses the reaction L-glutamyl-tRNA(Gln) + L-glutamine + ATP + H2O = L-glutaminyl-tRNA(Gln) + L-glutamate + ADP + phosphate + H(+). The catalysed reaction is L-aspartyl-tRNA(Asn) + L-glutamine + ATP + H2O = L-asparaginyl-tRNA(Asn) + L-glutamate + ADP + phosphate + 2 H(+). Allows the formation of correctly charged Asn-tRNA(Asn) or Gln-tRNA(Gln) through the transamidation of misacylated Asp-tRNA(Asn) or Glu-tRNA(Gln) in organisms which lack either or both of asparaginyl-tRNA or glutaminyl-tRNA synthetases. The reaction takes place in the presence of glutamine and ATP through an activated phospho-Asp-tRNA(Asn) or phospho-Glu-tRNA(Gln). The chain is Aspartyl/glutamyl-tRNA(Asn/Gln) amidotransferase subunit C from Rickettsia bellii (strain RML369-C).